A 211-amino-acid chain; its full sequence is uncharacterized protein (211 aa).

This is an uncharacterized protein from Archaeoglobus fulgidus (strain ATCC 49558 / DSM 4304 / JCM 9628 / NBRC 100126 / VC-16).